The following is a 535-amino-acid chain: Alkaline phosphatase, placental type (535 aa).

An N-terminal signal peptide occupies residues 1 to 22; sequence MLGPCMLLLLLLLGLRLQLSLG. Asp64 serves as a coordination point for Mg(2+). Residues Asp64 and Ser114 each coordinate Zn(2+). The active-site Phosphoserine intermediate is the Ser114. Residues Cys143 and Cys205 are joined by a disulfide bond. The N-linked (GlcNAc...) asparagine glycan is linked to Asn144. Residue Ser177 participates in Mg(2+) binding. Glu238 is a Ca(2+) binding site. Asn271 carries an N-linked (GlcNAc...) asparagine glycan. The Ca(2+) site is built by Phe291, Glu292, and Asp307. Glu333 contributes to the Mg(2+) binding site. Residues Asp338, His342, Asp379, and His380 each coordinate Zn(2+). Residues 425 to 449 form a disordered region; sequence DGARPDVTESESGSPEYRQQSAVPL. The span at 434–446 shows a compositional bias: polar residues; the sequence is SESGSPEYRQQSA. Residue His454 participates in Zn(2+) binding. Cys489 and Cys496 are disulfide-bonded. The GPI-anchor amidated aspartate moiety is linked to residue Asp506. Residues 507–535 constitute a propeptide, removed in mature form; the sequence is AAHPGRSVVPALLPLLAGTLLLLETATAP. The helical transmembrane segment at 513 to 529 threads the bilayer; the sequence is SVVPALLPLLAGTLLLL.

It belongs to the alkaline phosphatase family. Homodimer. Mg(2+) is required as a cofactor. The cofactor is Zn(2+). Requires Ca(2+) as cofactor. Detected in placenta (at protein level).

It localises to the cell membrane. The enzyme catalyses a phosphate monoester + H2O = an alcohol + phosphate. Alkaline phosphatase that can hydrolyze various phosphate compounds. The polypeptide is Alkaline phosphatase, placental type (Homo sapiens (Human)).